The primary structure comprises 40 residues: Lucifensin (40 aa).

3 disulfides stabilise this stretch: Cys3–Cys30, Cys16–Cys36, and Cys20–Cys38.

It belongs to the invertebrate defensin family. Type 1 subfamily. The disulfide bonds are essential for antimicrobial activity. In terms of tissue distribution, larval fat body, hemolymph and salivary glands (at protein level).

It is found in the secreted. Functionally, shows strong antibacterial activity against the Gram-positive bacterium M.luteus. Also shows antibacterial activity against the Gram-positive bacteria E.fecalis, S.aureus, S.carnosus, S.pneumoniae and S.pyogenes and against a number of methicillin-resistant S.aureus and glycopeptide-intermediate S.aureus isolates. Does not show antibacterial activity against Gram-negative bacteria or antifungal activity against C.utilis. Shows slight antifungal activity against C.albicans. This Lucilia cuprina (Green bottle fly) protein is Lucifensin.